The primary structure comprises 439 residues: L-tryptophan decarboxylase (439 aa).

Belongs to the phosphatidylserine decarboxylase family.

The enzyme catalyses L-tryptophan + H(+) = tryptamine + CO2. Its pathway is secondary metabolite biosynthesis. In terms of biological role, L-tryptophan decarboxylase; part of the gene cluster that mediates the biosynthesis of psilocybin, a psychotropic tryptamine-derived natural product. The first step in the pathway is the decarboxylation of L-tryptophan to tryptamine by the decarboxylase psiD. PsiD does not decarboxylate phenylalanine, tyrosine, or 5-hydroxy- L -tryptophan (5-HTP). 4-hydroxy-L-tryptophan is accepted as substrate by psiD as well. The cytochrome P450 monooxygenase psiH then converts tryptamine to 4-hydroxytryptamine. The kinase psiK catalyzes the 4-O-phosphorylation step by converting 4-hydroxytryptamine into norbaeocystin. The methyltransferase psiM then catalyzes iterative methyl transfer to the amino group of norbaeocystin to yield psilocybin via a monomethylated intermediate, baeocystin. 4-hydroxy-6-methyl-l-tryptophancan also be converted the decarboxylase PsiD, kinase PsiK, and methyltransferase PsiM into respectively 6-methyl-norbaeocystin, 6-methylbaeocystin, and 6-methylpsilocybin. The chain is L-tryptophan decarboxylase from Psilocybe cyanescens.